Consider the following 213-residue polypeptide: MNQTLLSEFGNPIERVKKAISALQLGEGIIILDDEKRENEGDLVFSSETMTVEQMALTIRYGSGIVCLCITESKRKKLNLPMMVKHNTSTYRTGFTVTIEASKGVSTGVSAKDRLTTIKTATADDAQPSDLNRPGHVFPLRANGGGILARAGHTEAAIEIVSLAGFKPYGVICELTNKDGSMSRTPEIIKFSKSKKMKILTIKDLILYVQNKK.

D-ribulose 5-phosphate is bound by residues 37-38 (RE), D42, 150-154 (RAGHT), and E174. A Mg(2+)-binding site is contributed by E38. Mg(2+) is bound at residue H153.

The protein belongs to the DHBP synthase family. Homodimer. Mg(2+) serves as cofactor. Mn(2+) is required as a cofactor.

It carries out the reaction D-ribulose 5-phosphate = (2S)-2-hydroxy-3-oxobutyl phosphate + formate + H(+). It functions in the pathway cofactor biosynthesis; riboflavin biosynthesis; 2-hydroxy-3-oxobutyl phosphate from D-ribulose 5-phosphate: step 1/1. In terms of biological role, catalyzes the conversion of D-ribulose 5-phosphate to formate and 3,4-dihydroxy-2-butanone 4-phosphate. The polypeptide is 3,4-dihydroxy-2-butanone 4-phosphate synthase (Buchnera aphidicola subsp. Schizaphis graminum (strain Sg)).